Here is a 404-residue protein sequence, read N- to C-terminus: NADH-quinone oxidoreductase subunit D 1 (404 aa).

Belongs to the complex I 49 kDa subunit family. As to quaternary structure, NDH-1 is composed of 14 different subunits. Subunits NuoB, C, D, E, F, and G constitute the peripheral sector of the complex.

Its subcellular location is the cell inner membrane. It carries out the reaction a quinone + NADH + 5 H(+)(in) = a quinol + NAD(+) + 4 H(+)(out). Its function is as follows. NDH-1 shuttles electrons from NADH, via FMN and iron-sulfur (Fe-S) centers, to quinones in the respiratory chain. The immediate electron acceptor for the enzyme in this species is believed to be ubiquinone. Couples the redox reaction to proton translocation (for every two electrons transferred, four hydrogen ions are translocated across the cytoplasmic membrane), and thus conserves the redox energy in a proton gradient. The polypeptide is NADH-quinone oxidoreductase subunit D 1 (Sorangium cellulosum (strain So ce56) (Polyangium cellulosum (strain So ce56))).